The primary structure comprises 1060 residues: Carbamoyl phosphate synthase large chain (1060 aa).

Residues 1-401 (MPKRTDIRKI…SLLKAVRSLE (401 aa)) are carboxyphosphate synthetic domain. The ATP site is built by Arg-129, Arg-169, Gly-175, Gly-176, Gln-208, Ile-210, Glu-215, Gly-241, Ile-242, His-243, Gln-284, and Glu-298. An ATP-grasp 1 domain is found at 133–327 (KNLMNQLNEP…IAKMAAKIAV (195 aa)). The Mg(2+) site is built by Gln-284, Glu-298, and Asn-300. Mn(2+) is bound by residues Gln-284, Glu-298, and Asn-300. Residues 402-546 (IGTAHLELDG…YTTYEQENES (145 aa)) form an oligomerization domain region. Positions 547–929 (LVSAKPSILV…ALYKAFEASG (383 aa)) are carbamoyl phosphate synthetic domain. One can recognise an ATP-grasp 2 domain in the interval 671 to 861 (DQLIQELNIP…MAQLATQLIL (191 aa)). Positions 707, 746, 748, 752, 777, 778, 779, 780, 820, and 832 each coordinate ATP. Mg(2+)-binding residues include Gln-820, Glu-832, and Asn-834. Mn(2+) contacts are provided by Gln-820, Glu-832, and Asn-834. One can recognise an MGS-like domain in the interval 930-1060 (MHLPSHGNVL…ESQSLLTKPL (131 aa)). The allosteric domain stretch occupies residues 930–1060 (MHLPSHGNVL…ESQSLLTKPL (131 aa)).

The protein belongs to the CarB family. In terms of assembly, composed of two chains; the small (or glutamine) chain promotes the hydrolysis of glutamine to ammonia, which is used by the large (or ammonia) chain to synthesize carbamoyl phosphate. Tetramer of heterodimers (alpha,beta)4. Requires Mg(2+) as cofactor. It depends on Mn(2+) as a cofactor.

The catalysed reaction is hydrogencarbonate + L-glutamine + 2 ATP + H2O = carbamoyl phosphate + L-glutamate + 2 ADP + phosphate + 2 H(+). The enzyme catalyses hydrogencarbonate + NH4(+) + 2 ATP = carbamoyl phosphate + 2 ADP + phosphate + 2 H(+). Its pathway is amino-acid biosynthesis; L-arginine biosynthesis; carbamoyl phosphate from bicarbonate: step 1/1. The protein operates within pyrimidine metabolism; UMP biosynthesis via de novo pathway; (S)-dihydroorotate from bicarbonate: step 1/3. Functionally, large subunit of the glutamine-dependent carbamoyl phosphate synthetase (CPSase). CPSase catalyzes the formation of carbamoyl phosphate from the ammonia moiety of glutamine, carbonate, and phosphate donated by ATP, constituting the first step of 2 biosynthetic pathways, one leading to arginine and/or urea and the other to pyrimidine nucleotides. The large subunit (synthetase) binds the substrates ammonia (free or transferred from glutamine from the small subunit), hydrogencarbonate and ATP and carries out an ATP-coupled ligase reaction, activating hydrogencarbonate by forming carboxy phosphate which reacts with ammonia to form carbamoyl phosphate. The sequence is that of Carbamoyl phosphate synthase large chain from Latilactobacillus sakei subsp. sakei (strain 23K) (Lactobacillus sakei subsp. sakei).